Consider the following 1716-residue polypeptide: Histone-lysine N-methyltransferase SETD1A (1716 aa).

An interaction with WDR82 region spans residues leucine 60 to glycine 89. In terms of domain architecture, RRM spans aspartate 84–lysine 172. Disordered regions lie at residues proline 194–proline 367, threonine 380–serine 499, phenylalanine 516–histidine 670, alanine 849–lysine 869, lysine 911–valine 1206, glutamate 1230–valine 1259, and glycine 1275–proline 1297. Residues serine 222–threonine 231 are compositionally biased toward low complexity. A compositionally biased stretch (polar residues) spans cysteine 243–glycine 277. 2 stretches are compositionally biased toward low complexity: residues serine 278 to serine 295 and serine 315 to serine 357. Residues serine 430 to proline 440 are compositionally biased toward pro residues. Residues glycine 441–alanine 461 show a composition bias toward gly residues. Serine 477 carries the post-translational modification Phosphoserine. Positions serine 477–glutamate 487 are enriched in low complexity. Residues threonine 488–serine 499 are compositionally biased toward polar residues. Phosphoserine is present on residues serine 521 and serine 578. Polar residues predominate over residues alanine 581–serine 591. Pro residues-rich tracts occupy residues serine 606–tyrosine 631 and glycine 638–histidine 670. Basic and acidic residues predominate over residues glutamine 859–lysine 869. Residue serine 930 is modified to Phosphoserine. 2 stretches are compositionally biased toward acidic residues: residues lysine 991 to valine 1009 and alanine 1018 to aspartate 1027. Low complexity predominate over residues serine 1028–serine 1071. Serine 1110 carries the post-translational modification Phosphoserine. A compositionally biased stretch (pro residues) spans glutamate 1130 to alanine 1150. Acidic residues predominate over residues aspartate 1283 to aspartate 1292. Positions glutamate 1307–alanine 1311 match the HCFC1-binding motif (HBM) motif. Disordered regions lie at residues glutamate 1355–arginine 1427 and threonine 1480–tyrosine 1508. The segment covering glutamate 1369–serine 1383 has biased composition (acidic residues). The segment covering arginine 1399–proline 1412 has biased composition (basic residues). Residues proline 1413 to phenylalanine 1424 are compositionally biased toward pro residues. Residues phenylalanine 1424–leucine 1459 form an interaction with CFP1 region. Positions leucine 1459–arginine 1546 are interaction with ASH2L, RBBP5 and WDR5. Positions glycine 1501–glutamate 1506 match the WDR5 interaction motif (WIN) motif. The short motif at arginine 1546–arginine 1551 is the RxxxRR motif element. Residues lysine 1577–lysine 1694 enclose the SET domain. S-adenosyl-L-methionine is bound at residue tyrosine 1693. The Post-SET domain occupies asparagine 1700–asparagine 1716.

Belongs to the class V-like SAM-binding methyltransferase superfamily. In terms of assembly, component of the SET1A/COMPASS complex composed of the catalytic subunit SETD1A, WDR5, WDR82, RBBP5, ASH2L/ASH2, CXXC1/CFP1, HCFC1 and DPY30 homotrimer. Forms a core complex with the evolutionary conserved subcomplex WRAD composed of WDR5, RBBP5, ASH2L/ASH2 and DPY30 subunits; WRAD differentially stimulates the methyltransferase activity. Interacts with BOD1L1 (via COMPASS-Shg1 domain) at replication forks. Interacts with HCFC1. Interacts with ASH2/ASH2L. Interacts with CXXC1/CFP1. Interacts with RBBP5. Interacts (via N-terminal region) with WDR82; the interaction is direct. Interacts (via the RRM domain) with hyperphosphorylated C-terminal domain (CTD) of RNA polymerase II large subunit (POLR2A) only in the presence of WDR82. Binds specifically to CTD heptad repeats phosphorylated on 'Ser-5' of each heptad. Interacts with ZNF335. Interacts with SUPT6H. Interacts with NAP1L1. Interacts (via WIN motif) with WDR5.

It localises to the nucleus. Its subcellular location is the nucleus speckle. The protein resides in the chromosome. The protein localises to the cytoplasm. The catalysed reaction is L-lysyl(4)-[histone H3] + S-adenosyl-L-methionine = N(6)-methyl-L-lysyl(4)-[histone H3] + S-adenosyl-L-homocysteine + H(+). The enzyme catalyses N(6)-methyl-L-lysyl(4)-[histone H3] + S-adenosyl-L-methionine = N(6),N(6)-dimethyl-L-lysyl(4)-[histone H3] + S-adenosyl-L-homocysteine + H(+). It carries out the reaction N(6),N(6)-dimethyl-L-lysyl(4)-[histone H3] + S-adenosyl-L-methionine = N(6),N(6),N(6)-trimethyl-L-lysyl(4)-[histone H3] + S-adenosyl-L-homocysteine + H(+). Functionally, histone methyltransferase that catalyzes methyl group transfer from S-adenosyl-L-methionine to the epsilon-amino group of 'Lys-4' of histone H3 (H3K4) via a non-processive mechanism. Part of chromatin remodeling machinery, forms H3K4me1, H3K4me2 and H3K4me3 methylation marks at active chromatin sites where transcription and DNA repair take place. Responsible for H3K4me3 enriched promoters and transcriptional programming of inner mass stem cells and neuron progenitors during embryogenesis. Required for H3K4me1 mark at stalled replication forks. Mediates FANCD2-dependent nucleosome remodeling and RAD51 nucleofilaments stabilization at reversed forks, protecting them from nucleolytic degradation. Does not methylate 'Lys-4' of histone H3 if the neighboring 'Lys-9' residue is already methylated. Has RNA binding activity towards transcripts involved in RNA processing and the DNA damage response. The chain is Histone-lysine N-methyltransferase SETD1A (Setd1a) from Mus musculus (Mouse).